The sequence spans 412 residues: NFATC2-interacting protein (412 aa).

The segment at 1–38 (MAEPLRGRGPRSRGGRGARRARGARGRCPRARQSPARL) is disordered. Residues 8-30 (RGPRSRGGRGARRARGARGRCPR) show a composition bias toward basic residues. Residues Ser49, Ser51, Ser79, Ser81, and Ser83 each carry the phosphoserine modification. Positions 58–115 (VADPVEVPVARLPAPAKPEQDSDSDSEGAAEGPAGAPRTLVRRRRRRLLDPGEAPVVP) are disordered. The segment covering 86 to 96 (AAEGPAGAPRT) has biased composition (low complexity). Ser118 carries the post-translational modification Phosphoserine. Lys120 is covalently cross-linked (Glycyl lysine isopeptide (Lys-Gly) (interchain with G-Cter in SUMO2)). The tract at residues 136–206 (KLCPSEPEDE…SSRNKSRKHT (71 aa)) is disordered. Positions 168–227 (RKKLRKKCEKEEKKMEEFPDQDISPLPQPSSRNKSRKHTEALQKLREVNKRLQDLRSCLS) form a coiled coil. Over residues 175–184 (CEKEEKKMEE) the composition is skewed to basic and acidic residues. A phosphoserine mark is found at Ser191, Ser197, and Ser307. A phosphothreonine mark is found at Thr309 and Thr311. The Ubiquitin-like domain maps to 341–412 (LRLRVQGKEK…ESGDLIEVWG (72 aa)). 2 positions are modified to phosphoserine: Ser362 and Ser383.

In terms of assembly, interacts with NFATC2, TRAF1, TRAF2 and PRMT1. Interacts with UBE2I/UBC9. Methylation at the N-terminus by PRMT1 modulates interaction with the NFAT complex and results in augmented cytokine production. Highest level detected in spleen, thymus and testis.

The protein resides in the nucleus. Its subcellular location is the cytoplasm. Functionally, in T-helper 2 (Th2) cells, regulates the magnitude of NFAT-driven transcription of a specific subset of cytokine genes, including IL3, IL4, IL5 and IL13, but not IL2. Recruits PRMT1 to the IL4 promoter; this leads to enhancement of histone H4 'Arg-3'-methylation and facilitates subsequent histone acetylation at the IL4 locus, thus promotes robust cytokine expression. Down-regulates formation of poly-SUMO chains by UBE2I/UBC9. In Mus musculus (Mouse), this protein is NFATC2-interacting protein (Nfatc2ip).